A 262-amino-acid chain; its full sequence is Thrombin-like enzyme gyroxin B1.3 (262 aa).

The first 18 residues, 1-18 (MVLIRVLANLLILQLSYA), serve as a signal peptide directing secretion. A propeptide spanning residues 19-262 (QKSSELVIGG…AGSETVNCPS (244 aa)) is cleaved from the precursor. In terms of domain architecture, Peptidase S1 spans 25–253 (VIGGDECNIN…HLDWIQNIIA (229 aa)). 6 cysteine pairs are disulfide-bonded: Cys31–Cys165, Cys52–Cys68, Cys102–Cys260, Cys144–Cys214, Cys176–Cys193, and Cys204–Cys229. His67 serves as the catalytic Charge relay system. A glycan (N-linked (GlcNAc...) asparagine) is linked at Asn105. Asp112 functions as the Charge relay system in the catalytic mechanism. The active-site Charge relay system is Ser208.

Belongs to the peptidase S1 family. Snake venom subfamily. In terms of assembly, monomer. In terms of tissue distribution, expressed by the venom gland.

Its subcellular location is the secreted. Thrombin-like snake venom serine protease. Displays a specificity similar to trypsin. Releases only fibrinopeptide A in the conversion of fibrinogen to fibrin. Reversibly increases the permeability of the blood brain barrier (BBB) in mice. Induces the barrel rotation syndrome in mice, which is manifested by gyroxin-like, rapid rolling motions. This syndrome may be due to its effect on BBB permeability, and certainly also to other actions affecting endogenous substrates present in the endothelium, nervous tissues or blood. Also shows a moderate inhibitory activity on the human voltage-gated potassium channel Kv10.1/KCNH1/EAG1 (58% current inhibition at 5 uM). It blocks Kv10.1/KCNH1/EAG1 in a time and dose-dependent manner and with a mechanism independent of its enzymatic activity. It may have a preference in interacting with Kv10.1/KCNH1/EAG1 in its closed state, since the inhibitory effect of the toxin is decreased at more depolarized potentials. The chain is Thrombin-like enzyme gyroxin B1.3 from Crotalus durissus terrificus (South American rattlesnake).